The primary structure comprises 356 residues: MTYEVAIVGASGYTGGELLRVLAVHPDVNVKVVTSREYANKPVYYAHPHLRGIYPASLKFKRLDDPDQLSDVVGDVDLVFLALPHKVSLHYVPKALEVGYKVVDLSADYRLKRVEDYKTWYGYEHPYPDLLEKAVYGLPELYGDKIRGAQLVANPGCNATSSILAVLPPAAERIIDLDRIVVDVKVGSSEAGAKPYRGGHHPEREGTARPYDAEGHRHVAELEQVIRDYTGRDVKVGFTPHAVSMIRGSLASAYSWLTKDLAPLDVQRIYAKYYAGKKFVKIVRGAPMPYPDVKNVYGSNYAEVGFALDKRVGRLAMFAAIDNLMKGAAGTAVQNMNLMLGMDEDEGLKNLVPVRP.

An NADP(+)-binding site is contributed by 11–14 (SGYT). Residue Cys157 is part of the active site. NADP(+) is bound at residue Asn323.

Belongs to the NAGSA dehydrogenase family. Type 1 subfamily. LysY sub-subfamily.

Its subcellular location is the cytoplasm. It carries out the reaction [amino-group carrier protein]-C-terminal-N-(1-carboxy-5-oxopentan-1-yl)-L-glutamine + phosphate + NADP(+) = [amino-group carrier protein]-C-terminal-N-(1-carboxy-5-phosphooxy-5-oxopentan-1-yl)-L-glutamine + NADPH + H(+). The catalysed reaction is [amino-group carrier protein]-C-terminal-gamma-(L-glutamyl-5-semialdehyde)-L-glutamate + phosphate + NADP(+) = [amino-group carrier protein]-C-terminal-gamma-(5-phospho-L-glutamyl)-L-glutamate + NADPH + H(+). It participates in amino-acid biosynthesis; L-lysine biosynthesis via AAA pathway; L-lysine from L-alpha-aminoadipate (Thermus route): step 3/5. Its pathway is amino-acid biosynthesis; L-arginine biosynthesis. Functionally, involved in both the arginine and lysine biosynthetic pathways. In Ignicoccus hospitalis (strain KIN4/I / DSM 18386 / JCM 14125), this protein is Putative [LysW]-L-2-aminoadipate/[LysW]-L-glutamate phosphate reductase.